A 236-amino-acid chain; its full sequence is Small ribosomal subunit protein uS3 (236 aa).

A KH type-2 domain is found at 39 to 107 (VRQFLTKELK…PAQINISEVR (69 aa)).

This sequence belongs to the universal ribosomal protein uS3 family. As to quaternary structure, part of the 30S ribosomal subunit. Forms a tight complex with proteins S10 and S14.

Functionally, binds the lower part of the 30S subunit head. Binds mRNA in the 70S ribosome, positioning it for translation. The sequence is that of Small ribosomal subunit protein uS3 from Aeromonas salmonicida (strain A449).